Reading from the N-terminus, the 593-residue chain is ABC1 family protein lscO (593 aa).

2 disordered regions span residues 1-29 (MDVA…GGKK) and 441-467 (PYKN…EERK). Basic and acidic residues-rich tracts occupy residues 8 to 22 (MERH…DDGT) and 457 to 467 (QRTKETPEERK).

The protein belongs to the protein kinase superfamily. ADCK protein kinase family.

In terms of biological role, ABC1 family protein; part of the gene cluster that mediates the biosynthesis of the lipopeptide antibiotics leucinostatins that show extensive biological activities, including antimalarial, antiviral, antibacterial, antifungal, and antitumor activities, as well as phytotoxic. The function of lcsO within the leucinostatins biosynthesis has not been identified yet. The protein is ABC1 family protein lscO of Purpureocillium lilacinum (Paecilomyces lilacinus).